We begin with the raw amino-acid sequence, 373 residues long: Nuclear hormone receptor family member nhr-69 (373 aa).

The nuclear receptor DNA-binding region spans 3–78; the sequence is EEICHICNDK…AGMKSNAIQN (76 aa). 2 consecutive NR C4-type zinc fingers follow at residues 6–26 and 42–66; these read CHICNDKSTGKHYGAISCDGC and CRFEQNCDVTKNKRNACRACRLQKC. In terms of domain architecture, NR LBD spans 93–344; that stretch reads EKEDLIDQLV…SLMEELILND (252 aa).

It belongs to the nuclear hormone receptor family. As to quaternary structure, interacts with R-SMAD daf-8. As to expression, expressed in the ASI neurons, hypodermis, and in tail neurons.

It localises to the nucleus. Functionally, orphan nuclear receptor which, in cooperation with R-SMAD daf-8, modulates the Insulin/IGF-1-like signaling (IIS) pathway, perhaps by regulating expression of the potassium channel exp-2, which in turn modulates the secretion of insulin-like peptide daf-28. This Caenorhabditis elegans protein is Nuclear hormone receptor family member nhr-69 (nhr-69).